The following is a 985-amino-acid chain: Exocyst complex component 4 (985 aa).

Positions 36–70 (SETTEERQKEKQKIEAEFKRSDLRLNELVSRHDQQ) form a coiled coil. Phosphoserine occurs at positions 235, 456, 459, 682, and 686. The tract at residues 434–480 (DKSSHVGTSNNSDAFKEHRRNASDASVDDNLAGQLGGSGKGSTSGLF) is disordered.

It belongs to the SEC8 family. In terms of assembly, the exocyst complex is composed of Sec3/Exoc1, Sec5/Exoc2, Sec6/Exoc3, Sec8/Exoc4, Sec10/Exoc5, Sec15/Exoc6, exo70/Exoc7 and Exo84/Exoc8. In terms of tissue distribution, abundant in the embryonic and larval glutamatergic neuromuscular junctions (NMJs), pre and postsynaptically.

Its function is as follows. Component of the exocyst complex involved in the docking of exocytic vesicles with fusion sites on the plasma membrane. Involved in regulation of synaptic microtubule formation, and also regulation of synaptic growth and glutamate receptor trafficking. Does not appear to be required for basal neurotransmission. This chain is Exocyst complex component 4, found in Drosophila melanogaster (Fruit fly).